Consider the following 2207-residue polypeptide: DNA polymerase epsilon catalytic subunit A (2207 aa).

Disordered regions lie at residues 1 to 20, 1201 to 1233, and 1934 to 1961; these read MPSR…AASF, SMEK…PFAS, and RPES…ENEE. Positions 2075, 2078, 2113, and 2116 each coordinate Zn(2+). Residues 2075–2116 form a CysA-type zinc finger; that stretch reads CSACCLIRDLDLCRDEDVLPERGSGSGPDSATSSRPWCCPFC. [4Fe-4S] cluster is bound by residues C2147, C2150, C2162, and C2164. Residues 2147-2164 carry the CysB motif motif; it reads CSKCGTLKISEFMEHCSC.

This sequence belongs to the DNA polymerase type-B family. In terms of assembly, heterotetramer. Consists of 4 subunits: pol2, dpb2, dpb3 and dpb4. Requires [4Fe-4S] cluster as cofactor.

The protein resides in the nucleus. It catalyses the reaction DNA(n) + a 2'-deoxyribonucleoside 5'-triphosphate = DNA(n+1) + diphosphate. Its function is as follows. DNA polymerase II participates in chromosomal DNA replication. This chain is DNA polymerase epsilon catalytic subunit A (pol2), found in Emericella nidulans (strain FGSC A4 / ATCC 38163 / CBS 112.46 / NRRL 194 / M139) (Aspergillus nidulans).